A 358-amino-acid chain; its full sequence is C-X-C chemokine receptor type 4-A (358 aa).

The segment at methionine 1–phenylalanine 25 is important for chemokine binding and signaling. The Extracellular portion of the chain corresponds to methionine 1–phenylalanine 44. Residues asparagine 16 and asparagine 20 are each glycosylated (N-linked (GlcNAc...) asparagine). Disulfide bonds link cysteine 32/cysteine 281 and cysteine 113/cysteine 190. The helical transmembrane segment at leucine 45–methionine 67 threads the bilayer. The Cytoplasmic portion of the chain corresponds to glycine 68–arginine 81. Residues leucine 82–alanine 103 traverse the membrane as a helical segment. A chemokine binding region spans residues tryptophan 98–aspartate 101. Topologically, residues isoleucine 104–lysine 114 are extracellular. The helical transmembrane segment at alanine 115–isoleucine 134 threads the bilayer. Residues histidine 117–threonine 121 form a chemokine binding region. The Cytoplasmic portion of the chain corresponds to serine 135 to lysine 158. The involved in dimerization; when bound to chemokine stretch occupies residues tyrosine 139–serine 151. The helical transmembrane segment at valine 159–phenylalanine 178 threads the bilayer. The Extracellular portion of the chain corresponds to alanine 179–tryptophan 202. Positions cysteine 190–tyrosine 194 are chemokine binding, important for signaling. Residues threonine 203–leucine 223 form a helical membrane-spanning segment. Topologically, residues isoleucine 224–threonine 248 are cytoplasmic. The chain crosses the membrane as a helical span at residues valine 249–threonine 268. Residues aspartate 269 to methionine 289 lie on the Extracellular side of the membrane. Residues alanine 290–tyrosine 309 traverse the membrane as a helical segment. At alanine 310–serine 358 the chain is on the cytoplasmic side. The segment at lysine 338–serine 358 is disordered. Residues serine 344–serine 358 show a composition bias toward low complexity.

The protein belongs to the G-protein coupled receptor 1 family. As to quaternary structure, monomer. Can form dimers. Post-translationally, sulfation is required for efficient binding of cxcl12/sdf-1alpha and promotes its dimerization. In terms of processing, O- and N-glycosylated. In terms of tissue distribution, highly expressed in the embryonic nervous system including forebrain, hindbrain and sensory organs (including eye), and in neural crest cells. Also expressed in the dorsal lateral plate, the first site of definitive hematopoiesis in the embryo. Appears in migrating presumptive primordial germ cells (pPGCs) from stage 24. Expressed in the epidermis at stage 40. In the adult, highly expressed in the spleen with lower levels of expression in the liver and very low levels in kidney, heart, skin and brain.

The protein resides in the cell membrane. Its subcellular location is the cytoplasm. It is found in the nucleus. The protein localises to the early endosome. It localises to the late endosome. The protein resides in the lysosome. Functionally, receptor for the C-X-C chemokine cxcl12/sdf-1. Transduces a signal by increasing the intracellular level of calcium ions. Signaling with cxcl12/sdf-1 mediates the directional movement of mesodermal cells during gastrulation. May play a role in the migration of embryonic presumptive primordial germ cells (pPGCs). May also be involved in regulating the migration of hematopoietic stem cells into the larval liver. The chain is C-X-C chemokine receptor type 4-A (cxcr4-a) from Xenopus laevis (African clawed frog).